Here is a 356-residue protein sequence, read N- to C-terminus: MREFTPTTLSEEERQELLGQLRRKEGRWLAWARACQTLLKNGLNPQTLFEATGFEPIQQNQITVAMQVYDSILRQDPPAHVRETYQEWGSDLLYELRELDQEQRSLCAQLALERKLDADQIREVAKATKDFCRLPKQPENFDRHPGDAVAHQCWRLAQERTDLTERSRLIARGLQFAQSAGARALIEALLLDLSGVPSRKPPMLPIYRLETEEDLPRLLPFAGTLPLSSSQIEAIAAVEAEGPFGLVSSPQGQQWLALPGWQAILTAEDPIACLEQIDRLPNAPEGPTEAVVLVVDRADRDWDADHFFLVEQAEGARIQWSPSAIAAPILGRLVLILRPKRVLDEAAIATPWQFEE.

The N-terminal alpha-helix stretch occupies residues Leu9 to Asp192. Residues Pro216 to Val342 form a C-terminal beta-sheet region.

Belongs to the RAF family. As to quaternary structure, homodimer. Forms an RbcL(8)-Raf1(8) complex. Forms complexes of many stoichiometries with RbcL with and without RbcS. RbcX and Raf1 can bind simultaneously to RbcL.

Its subcellular location is the cytoplasm. Functionally, a major RuBisCO chaperone. Acts after GroEL-GroES chaperonin to fold and/or assemble the large subunit of RuBisCO (ccbL, rbcL). Cooperates with RbcX in RbcL folding, plays the major role in assembly of dimers into RbcL(8)-Raf1(8) intermediate complexes. RbcS replaces Raf1, leading to holoenzyme formation. Its function is as follows. The Raf1 dimer brackets an RbcL dimer, leading to RbcL(8)-Raf1(8) complex formation. RbcS displaces Raf1, resulting in holoenzyme formation. Probably plays a role in early carboxysome assembly; in its absence CcaA, CcmM, CcmN, RbcL and RbcS colocalize in small patches while the shell proteins CcmK2, CcmK3 and CcmK4 are found diffused in the cytoplasm. It has been suggested that Raf1 and RbcX are partially functionally redundant. Other evidence suggests they are antagonistic in mediating RuBisCO assembly. The polypeptide is RuBisCO accumulation factor 1 (Synechococcus elongatus (strain ATCC 33912 / PCC 7942 / FACHB-805) (Anacystis nidulans R2)).